The primary structure comprises 535 residues: Bifunctional purine biosynthesis protein PurH (535 aa).

Residues 6–151 (TRLPIRRALI…KNHKDVAIVV (146 aa)) enclose the MGS-like domain.

It belongs to the PurH family.

The catalysed reaction is (6R)-10-formyltetrahydrofolate + 5-amino-1-(5-phospho-beta-D-ribosyl)imidazole-4-carboxamide = 5-formamido-1-(5-phospho-D-ribosyl)imidazole-4-carboxamide + (6S)-5,6,7,8-tetrahydrofolate. It carries out the reaction IMP + H2O = 5-formamido-1-(5-phospho-D-ribosyl)imidazole-4-carboxamide. It functions in the pathway purine metabolism; IMP biosynthesis via de novo pathway; 5-formamido-1-(5-phospho-D-ribosyl)imidazole-4-carboxamide from 5-amino-1-(5-phospho-D-ribosyl)imidazole-4-carboxamide (10-formyl THF route): step 1/1. Its pathway is purine metabolism; IMP biosynthesis via de novo pathway; IMP from 5-formamido-1-(5-phospho-D-ribosyl)imidazole-4-carboxamide: step 1/1. In Pseudomonas fluorescens (strain SBW25), this protein is Bifunctional purine biosynthesis protein PurH.